We begin with the raw amino-acid sequence, 37 residues long: Omega-agatoxin-Aa3d (37 aa).

It belongs to the neurotoxin 04 (omega-agtx) family. 03 (type II/III omega-agtx) subfamily. Disulfide bonds are present. In terms of tissue distribution, expressed by the venom gland.

It localises to the secreted. Its function is as follows. Omega-agatoxins are antagonists of voltage-gated calcium channels. This toxin blocks calcium channels in insect central neurons but not at peripheral neuromuscular junctions. In vertebrates, it is broadly active against all high-threshold Cav1/CACNA1 channels and Cav2.2/CACNA1B channels. In Agelenopsis aperta (North American funnel-web spider), this protein is Omega-agatoxin-Aa3d.